The sequence spans 219 residues: Small ribosomal subunit protein uS3 (219 aa).

The 69-residue stretch at 38-106 (VRKFVKTKLQ…QVAVNIVEVK (69 aa)) folds into the KH type-2 domain.

The protein belongs to the universal ribosomal protein uS3 family. Part of the 30S ribosomal subunit. Forms a tight complex with proteins S10 and S14.

Binds the lower part of the 30S subunit head. Binds mRNA in the 70S ribosome, positioning it for translation. This chain is Small ribosomal subunit protein uS3, found in Desulfitobacterium hafniense (strain DSM 10664 / DCB-2).